The sequence spans 37 residues: Large ribosomal subunit protein bL36 (37 aa).

The protein belongs to the bacterial ribosomal protein bL36 family.

This chain is Large ribosomal subunit protein bL36, found in Bacillus pumilus (strain SAFR-032).